Here is a 485-residue protein sequence, read N- to C-terminus: Ribulose bisphosphate carboxylase large chain (485 aa).

A propeptide spanning residues 1–2 is cleaved from the precursor; sequence MS. The residue at position 3 (proline 3) is an N-acetylproline. Lysine 14 is subject to N6,N6,N6-trimethyllysine. The substrate site is built by asparagine 123 and threonine 173. The Proton acceptor role is filled by lysine 175. Lysine 177 is a substrate binding site. Lysine 201, aspartate 203, and glutamate 204 together coordinate Mg(2+). At lysine 201 the chain carries N6-carboxylysine. Histidine 294 functions as the Proton acceptor in the catalytic mechanism. Substrate is bound by residues arginine 295, histidine 327, and serine 379.

It belongs to the RuBisCO large chain family. Type I subfamily. Heterohexadecamer of 8 large chains and 8 small chains; disulfide-linked. The disulfide link is formed within the large subunit homodimers. Requires Mg(2+) as cofactor. The disulfide bond which can form in the large chain dimeric partners within the hexadecamer appears to be associated with oxidative stress and protein turnover.

The protein localises to the plastid. It is found in the chloroplast. It catalyses the reaction 2 (2R)-3-phosphoglycerate + 2 H(+) = D-ribulose 1,5-bisphosphate + CO2 + H2O. It carries out the reaction D-ribulose 1,5-bisphosphate + O2 = 2-phosphoglycolate + (2R)-3-phosphoglycerate + 2 H(+). Functionally, ruBisCO catalyzes two reactions: the carboxylation of D-ribulose 1,5-bisphosphate, the primary event in carbon dioxide fixation, as well as the oxidative fragmentation of the pentose substrate in the photorespiration process. Both reactions occur simultaneously and in competition at the same active site. In Flaveria pringlei, this protein is Ribulose bisphosphate carboxylase large chain.